A 794-amino-acid polypeptide reads, in one-letter code: 6-hydroxypseudooxynicotine dehydrogenase complex subunit gamma (794 aa).

As to quaternary structure, heterohexamer of 2 alpha (kdhA), 2 beta (kdhB) and 2 gamma (kdhC) subunit. Dimer of heterotrimers. The cofactor is Mo-molybdopterin cytosine dinucleotide.

It carries out the reaction 6-hydroxypseudooxynicotine + A + H2O = 2,6-dihydroxypseudooxynicotine + AH2. It functions in the pathway alkaloid degradation; nicotine degradation. Molybdo-flavoprotein enzyme complex involved in nicotine degradation. The subunit gamma (large subunit) contains the substrate-binding sites, the subunit alpha (medium subunit) binds FAD and the subunit beta (small subunit) has a 2Fe-2S ferredoxin-type domain which binds 2 2Fe-2S clusters. In Paenarthrobacter nicotinovorans (Arthrobacter nicotinovorans), this protein is 6-hydroxypseudooxynicotine dehydrogenase complex subunit gamma (kdhC).